A 118-amino-acid chain; its full sequence is V-type proton ATPase subunit G 3 (118 aa).

Residues 1 to 34 are disordered; sequence MTSQSQGIHQLLQAEKRAKDKLEEAKKRKGKRLK. A coiled-coil region spans residues 5–54; that stretch reads SQGIHQLLQAEKRAKDKLEEAKKRKGKRLKQAKEEAMVEIDQYRMQRDKE. Residues 14-26 show a composition bias toward basic and acidic residues; it reads AEKRAKDKLEEAK.

The protein belongs to the V-ATPase G subunit family. V-ATPase is a heteromultimeric enzyme made up of two complexes: the ATP-hydrolytic V1 complex and the proton translocation V0 complex. The V1 complex consists of three catalytic AB heterodimers that form a heterohexamer, three peripheral stalks each consisting of EG heterodimers, one central rotor including subunits D and F, and the regulatory subunits C and H. The proton translocation complex V0 consists of the proton transport subunit a, a ring of proteolipid subunits c9c'', rotary subunit d, subunits e and f, and the accessory subunits ATP6AP1/Ac45 and ATP6AP2/PRR. As to expression, kidney.

Its function is as follows. Subunit of the V1 complex of vacuolar(H+)-ATPase (V-ATPase), a multisubunit enzyme composed of a peripheral complex (V1) that hydrolyzes ATP and a membrane integral complex (V0) that translocates protons. V-ATPase is responsible for acidifying and maintaining the pH of intracellular compartments and in some cell types, is targeted to the plasma membrane, where it is responsible for acidifying the extracellular environment. This Homo sapiens (Human) protein is V-type proton ATPase subunit G 3 (ATP6V1G3).